Consider the following 434-residue polypeptide: UDP-glucose 6-dehydrogenase (434 aa).

Residues 2–19 (NITF…GIIM), Val-11, Asp-30, Lys-35, Thr-121, and Glu-152 contribute to the NAD(+) site. Residues 148-152 (EFLRE), Lys-204, Asn-208, 249-253 (FLNAG), and Gly-257 each bind substrate. Cys-260 functions as the Nucleophile in the catalytic mechanism. Position 263 (Lys-263) interacts with NAD(+). Position 321 (Lys-321) interacts with substrate. Residue Arg-328 coordinates NAD(+).

Belongs to the UDP-glucose/GDP-mannose dehydrogenase family.

It catalyses the reaction UDP-alpha-D-glucose + 2 NAD(+) + H2O = UDP-alpha-D-glucuronate + 2 NADH + 3 H(+). Its pathway is nucleotide-sugar biosynthesis; UDP-alpha-D-glucuronate biosynthesis; UDP-alpha-D-glucuronate from UDP-alpha-D-glucose: step 1/1. The polypeptide is UDP-glucose 6-dehydrogenase (udg) (Rickettsia typhi (strain ATCC VR-144 / Wilmington)).